The chain runs to 104 residues: Intracellular chorismate mutase (104 aa).

Residues 23–104 (AVPEIDDLRR…LRLGRGRLGY (82 aa)) enclose the Chorismate mutase domain. 3 residues coordinate chorismate: Arg59, Val68, and Glu72.

As to quaternary structure, homodimer. Probably interacts with AroG (MSMEG_4244).

The protein localises to the cytoplasm. The catalysed reaction is chorismate = prephenate. It functions in the pathway metabolic intermediate biosynthesis; prephenate biosynthesis; prephenate from chorismate: step 1/1. The formation of the complex with AroG activates the chorismate mutase activity. Catalyzes the Claisen rearrangement of chorismate to prephenate. Probably involved in the aromatic amino acid biosynthesis. This Mycolicibacterium smegmatis (strain ATCC 700084 / mc(2)155) (Mycobacterium smegmatis) protein is Intracellular chorismate mutase.